The following is a 350-amino-acid chain: Sterol-4-alpha-carboxylate 3-dehydrogenase ERG26, decarboxylating (350 aa).

Residues 12 to 18, 63 to 64, and 85 to 87 contribute to the NADP(+) site; these read GGSGFLG, DL, and SAS. 2 residues coordinate substrate: Ser125 and Tyr152. NADP(+)-binding positions include Tyr152, Lys156, and 179-182; that span reads PAGI. The active-site Proton donor is the Lys156.

It belongs to the 3-beta-HSD family. As to quaternary structure, heterotetramer of ERG25, ERG26, ERG27 and ERG28. ERG28 acts as a scaffold to tether ERG27 and other 4,4-demethylation-related enzymes, forming a demethylation enzyme complex, in the endoplasmic reticulum.

The protein resides in the endoplasmic reticulum membrane. The catalysed reaction is 4beta-methylzymosterol-4alpha-carboxylate + NADP(+) = 3-dehydro-4-methylzymosterol + CO2 + NADPH. Its pathway is steroid biosynthesis; zymosterol biosynthesis; zymosterol from lanosterol: step 4/6. Functionally, sterol-4-alpha-carboxylate 3-dehydrogenase; part of the third module of ergosterol biosynthesis pathway that includes the late steps of the pathway. ERG26 is a catalytic component of the C-4 demethylation complex that catalyzes the oxidative decarboxylation that results in a reduction of the 3-beta-hydroxy group at the C-3 carbon to an oxo group. The third module or late pathway involves the ergosterol synthesis itself through consecutive reactions that mainly occur in the endoplasmic reticulum (ER) membrane. Firstly, the squalene synthase ERG9 catalyzes the condensation of 2 farnesyl pyrophosphate moieties to form squalene, which is the precursor of all steroids. Squalene synthase is crucial for balancing the incorporation of farnesyl diphosphate (FPP) into sterol and nonsterol isoprene synthesis. Secondly, the squalene epoxidase ERG1 catalyzes the stereospecific oxidation of squalene to (S)-2,3-epoxysqualene, which is considered to be a rate-limiting enzyme in steroid biosynthesis. Then, the lanosterol synthase ERG7 catalyzes the cyclization of (S)-2,3 oxidosqualene to lanosterol, a reaction that forms the sterol core. In the next steps, lanosterol is transformed to zymosterol through a complex process involving various demethylation, reduction and desaturation reactions. The lanosterol 14-alpha-demethylase ERG11 (also known as CYP51) catalyzes C14-demethylation of lanosterol to produce 4,4'-dimethyl cholesta-8,14,24-triene-3-beta-ol, which is critical for ergosterol biosynthesis. The C-14 reductase ERG24 reduces the C14=C15 double bond of 4,4-dimethyl-cholesta-8,14,24-trienol to produce 4,4-dimethyl-cholesta-8,24-dienol. 4,4-dimethyl-cholesta-8,24-dienol is substrate of the C-4 demethylation complex ERG25-ERG26-ERG27 in which ERG25 catalyzes the three-step monooxygenation required for the demethylation of 4,4-dimethyl and 4alpha-methylsterols, ERG26 catalyzes the oxidative decarboxylation that results in a reduction of the 3-beta-hydroxy group at the C-3 carbon to an oxo group, and ERG27 is responsible for the reduction of the keto group on the C-3. ERG28 has a role as a scaffold to help anchor ERG25, ERG26 and ERG27 to the endoplasmic reticulum and ERG29 regulates the activity of the iron-containing C4-methylsterol oxidase ERG25. Then, the sterol 24-C-methyltransferase ERG6 catalyzes the methyl transfer from S-adenosyl-methionine to the C-24 of zymosterol to form fecosterol. The C-8 sterol isomerase ERG2 catalyzes the reaction which results in unsaturation at C-7 in the B ring of sterols and thus converts fecosterol to episterol. The sterol-C5-desaturase ERG3 then catalyzes the introduction of a C-5 double bond in the B ring to produce 5-dehydroepisterol. The C-22 sterol desaturase ERG5 further converts 5-dehydroepisterol into ergosta-5,7,22,24(28)-tetraen-3beta-ol by forming the C-22(23) double bond in the sterol side chain. Finally, ergosta-5,7,22,24(28)-tetraen-3beta-ol is substrate of the C-24(28) sterol reductase ERG4 to produce ergosterol. The chain is Sterol-4-alpha-carboxylate 3-dehydrogenase ERG26, decarboxylating from Candida albicans (strain SC5314 / ATCC MYA-2876) (Yeast).